A 187-amino-acid polypeptide reads, in one-letter code: NADH-quinone oxidoreductase subunit C 2 (187 aa).

Residues 153–187 (YKDKLNPFGAEGPPPTQPDLATRDIPQGRPSTPES) are disordered.

Belongs to the complex I 30 kDa subunit family. In terms of assembly, NDH-1 is composed of 14 different subunits. Subunits NuoB, C, D, E, F, and G constitute the peripheral sector of the complex.

The protein localises to the cell inner membrane. It catalyses the reaction a quinone + NADH + 5 H(+)(in) = a quinol + NAD(+) + 4 H(+)(out). Functionally, NDH-1 shuttles electrons from NADH, via FMN and iron-sulfur (Fe-S) centers, to quinones in the respiratory chain. The immediate electron acceptor for the enzyme in this species is believed to be ubiquinone. Couples the redox reaction to proton translocation (for every two electrons transferred, four hydrogen ions are translocated across the cytoplasmic membrane), and thus conserves the redox energy in a proton gradient. The protein is NADH-quinone oxidoreductase subunit C 2 of Rhizobium etli (strain CIAT 652).